The primary structure comprises 246 residues: Mast cell protease 9 (246 aa).

An N-terminal signal peptide occupies residues 1–18 (MQALLFLMALLLPSRAGA). The propeptide at 19–20 (EE) is activation peptide. A Peptidase S1 domain is found at 21 to 244 (IIGGVESEPH…HVPWINRVIK (224 aa)). A disulfide bond links Cys-50 and Cys-66. Residues His-65 and Asp-109 each act as charge relay system in the active site. 2 cysteine pairs are disulfide-bonded: Cys-143–Cys-208 and Cys-174–Cys-187. The Charge relay system role is filled by Ser-202.

The protein belongs to the peptidase S1 family. Granzyme subfamily. Selectively expressed in uterine mast cells.

The polypeptide is Mast cell protease 9 (Mcpt9) (Mus musculus (Mouse)).